We begin with the raw amino-acid sequence, 388 residues long: Pepsin A-4 (388 aa).

The N-terminal stretch at 1–15 is a signal peptide; sequence MKWLLLLGLVALSEC. A propeptide spans 16–62 (activation peptide); that stretch reads IMYKVPLIRKKSLRRTLSERGLLKDFLKKHNLNPARKYFPQWEAPTL. A Peptidase A1 domain is found at 76–385; the sequence is YFGTIGIGTP…DRANNQVGLA (310 aa). Aspartate 94 is a catalytic residue. A disulfide bridge connects residues cysteine 107 and cysteine 112. At serine 130 the chain carries Phosphoserine. Cysteine 268 and cysteine 272 are disulfide-bonded. Aspartate 277 is an active-site residue. A disulfide bridge connects residues cysteine 311 and cysteine 344.

Belongs to the peptidase A1 family.

The protein localises to the secreted. The catalysed reaction is Preferential cleavage: hydrophobic, preferably aromatic, residues in P1 and P1' positions. Cleaves 1-Phe-|-Val-2, 4-Gln-|-His-5, 13-Glu-|-Ala-14, 14-Ala-|-Leu-15, 15-Leu-|-Tyr-16, 16-Tyr-|-Leu-17, 23-Gly-|-Phe-24, 24-Phe-|-Phe-25 and 25-Phe-|-Tyr-26 bonds in the B chain of insulin.. In terms of biological role, shows particularly broad specificity; although bonds involving phenylalanine and leucine are preferred, many others are also cleaved to some extent. The protein is Pepsin A-4 (PGA4) of Homo sapiens (Human).